The chain runs to 493 residues: Glutamyl-tRNA(Gln) amidotransferase subunit A (493 aa).

Residues lysine 79 and serine 159 each act as charge relay system in the active site. Catalysis depends on serine 183, which acts as the Acyl-ester intermediate.

The protein belongs to the amidase family. GatA subfamily. In terms of assembly, heterotrimer of A, B and C subunits.

It carries out the reaction L-glutamyl-tRNA(Gln) + L-glutamine + ATP + H2O = L-glutaminyl-tRNA(Gln) + L-glutamate + ADP + phosphate + H(+). Functionally, allows the formation of correctly charged Gln-tRNA(Gln) through the transamidation of misacylated Glu-tRNA(Gln) in organisms which lack glutaminyl-tRNA synthetase. The reaction takes place in the presence of glutamine and ATP through an activated gamma-phospho-Glu-tRNA(Gln). This chain is Glutamyl-tRNA(Gln) amidotransferase subunit A, found in Chelativorans sp. (strain BNC1).